The chain runs to 67 residues: Conotoxin Cl14c (67 aa).

The first 20 residues, 1 to 20, serve as a signal peptide directing secretion; the sequence is MNVTVMFLVLLLLTMPLTDG. The propeptide occupies 21-48; it reads FNIRATNGGELFGPVQRDAGNVLDHGFQ.

The protein belongs to the conotoxin L superfamily. Contains 2 disulfide bonds. In terms of tissue distribution, expressed by the venom duct.

It is found in the secreted. This chain is Conotoxin Cl14c, found in Californiconus californicus (California cone).